The following is a 187-amino-acid chain: MPEVERKSKITASRKLMLKSLMLAKAKECWEQEHEEREAEKVRYLSERIPTLQTRGLSLSALQDLCRELHAKVEVVDEERYDIEAKCLHNTREIKDLKLKVLDLRGKFKRPPLRRVRVSADAMLRALLGSKHKVSMDLRANLKSVKKEDTEKERPVEVGDWRKNVEAMSGMEGRKKMFDAAKSPTSQ.

P2 carries the N-acetylproline modification. The segment at 2–48 is involved in binding TNC; the sequence is PEVERKSKITASRKLMLKSLMLAKAKECWEQEHEEREAEKVRYLSER. S58 is modified (phosphoserine). The interval 97 to 118 is involved in binding TNC and actin; it reads LKLKVLDLRGKFKRPPLRRVRV.

Belongs to the troponin I family. Binds to actin and tropomyosin.

Troponin I is the inhibitory subunit of troponin, the thin filament regulatory complex which confers calcium-sensitivity to striated muscle actomyosin ATPase activity. This Mus musculus (Mouse) protein is Troponin I, slow skeletal muscle (Tnni1).